The chain runs to 217 residues: Large ribosomal subunit protein uL3 (217 aa).

Residues 134–146 (GRATHGNSRSHNV) show a composition bias toward polar residues. The segment at 134–154 (GRATHGNSRSHNVPGSIGMAQ) is disordered. N5-methylglutamine is present on glutamine 154.

Belongs to the universal ribosomal protein uL3 family. In terms of assembly, part of the 50S ribosomal subunit. Forms a cluster with proteins L14 and L19. In terms of processing, methylated by PrmB.

Functionally, one of the primary rRNA binding proteins, it binds directly near the 3'-end of the 23S rRNA, where it nucleates assembly of the 50S subunit. The chain is Large ribosomal subunit protein uL3 from Burkholderia cenocepacia (strain HI2424).